Here is a 634-residue protein sequence, read N- to C-terminus: DNA-directed RNA polymerase subunit gamma (634 aa).

Cys74, Cys76, Cys89, and Cys92 together coordinate Zn(2+). Positions 471, 473, and 475 each coordinate Mg(2+).

This sequence belongs to the RNA polymerase beta' chain family. RpoC1 subfamily. In cyanobacteria the RNAP catalytic core is composed of 2 alpha, 1 beta, 1 beta', 1 gamma and 1 omega subunit. When a sigma factor is associated with the core the holoenzyme is formed, which can initiate transcription. The cofactor is Mg(2+). Zn(2+) is required as a cofactor.

It catalyses the reaction RNA(n) + a ribonucleoside 5'-triphosphate = RNA(n+1) + diphosphate. In terms of biological role, DNA-dependent RNA polymerase catalyzes the transcription of DNA into RNA using the four ribonucleoside triphosphates as substrates. The polypeptide is DNA-directed RNA polymerase subunit gamma (Synechococcus sp. (strain CC9902)).